A 173-amino-acid polypeptide reads, in one-letter code: Alpha-crystallin A chain (173 aa).

The residue at position 1 (Met1) is an N-acetylmethionine. Residues 1-63 (MDVTIQHPWF…RTVLDSGISE (63 aa)) form a required for complex formation with BFSP1 and BFSP2 region. A Deamidated glutamine; partial modification is found at Gln6. Ser45 is subject to Phosphoserine. Gln50 and Gln90 each carry deamidated glutamine; partial. A sHSP domain is found at 52–162 (LFRTVLDSGI…SHSERAIPVS (111 aa)). At Lys99 the chain carries N6-acetyllysine. His100 contributes to the Zn(2+) binding site. Asn101 carries the deamidated asparagine; partial modification. The Zn(2+) site is built by Glu102 and His107. Residue Ser122 is modified to Phosphoserine. Asn123 carries the post-translational modification Deamidated asparagine; partial. Cysteines 131 and 142 form a disulfide. Deamidated glutamine; partial is present on Gln147. Positions 149-173 (GMDASHSERAIPVSREEKPSSAPSS) are disordered. Residues 153 to 167 (SHSERAIPVSREEKP) show a composition bias toward basic and acidic residues. His154 serves as a coordination point for Zn(2+). Ser162 carries an O-linked (GlcNAc) serine glycan.

It belongs to the small heat shock protein (HSP20) family. Heteromer composed of three CRYAA and one CRYAB subunits. Inter-subunit bridging via zinc ions enhances stability, which is crucial as there is no protein turn over in the lens. Can also form homodimers and homotetramers (dimers of dimers) which serve as the building blocks of homooligomers. Within homooligomers, the zinc-binding motif is created from residues of 3 different molecules. His-100 and Glu-102 from one molecule are ligands of the zinc ion, and His-107 and His-154 residues from additional molecules complete the site with tetrahedral coordination geometry. Part of a complex required for lens intermediate filament formation composed of BFSP1, BFSP2 and CRYAA. Post-translationally, undergoes age-dependent proteolytical cleavage at the C-terminus.

Its subcellular location is the cytoplasm. The protein localises to the nucleus. Functionally, contributes to the transparency and refractive index of the lens. In its oxidized form (absence of intramolecular disulfide bond), acts as a chaperone, preventing aggregation of various proteins under a wide range of stress conditions. Required for the correct formation of lens intermediate filaments as part of a complex composed of BFSP1, BFSP2 and CRYAA. The polypeptide is Alpha-crystallin A chain (CRYAA) (Loxodonta africana (African elephant)).